The chain runs to 502 residues: AMP phosphorylase (502 aa).

AMP is bound by residues Gly-168, 195–200 (SRAITS), and Thr-204. Asp-257 serves as the catalytic Proton donor. 2 residues coordinate AMP: Ser-265 and Lys-289.

Belongs to the thymidine/pyrimidine-nucleoside phosphorylase family. Type 2 subfamily.

The catalysed reaction is AMP + phosphate = alpha-D-ribose 1,5-bisphosphate + adenine. It carries out the reaction CMP + phosphate = cytosine + alpha-D-ribose 1,5-bisphosphate. It catalyses the reaction UMP + phosphate = alpha-D-ribose 1,5-bisphosphate + uracil. Its function is as follows. Catalyzes the conversion of AMP and phosphate to adenine and ribose 1,5-bisphosphate (R15P). Exhibits phosphorylase activity toward CMP and UMP in addition to AMP. Functions in an archaeal AMP degradation pathway, together with R15P isomerase and RubisCO. This is AMP phosphorylase from Hyperthermus butylicus (strain DSM 5456 / JCM 9403 / PLM1-5).